The chain runs to 382 residues: MTPIPDPAQLTARLIRCASVTPDEGGALVLLADVLGAAGFECHRVDREGVPNLFARWGAQGARTFGFNGHTDVVPPGDPASWTHPPFSGHEAEGWIWGRGATDMKSGVAAFAAAAIGFVTQTPPPDGAVILAITGDEEGPGKHGTRALLDWMAARGERMDVCIVGEPSNPDRMGEMIKIGRRGSMTLQIEAHGIQGHAAYPHRARNPIHALLRLLHELTDAPLDEGTEHFDPSGLQVTTVDCGNPASNVIPERARAVINIRFNDAHTAESLDRMIRARAAAISAETKVDFAISTDVSGESFLTAPGPFVDLVAGVVREETGLDPVLSTSGGTSDARFVKDHCPVLEFGLVGHFMHQVDERVPADQVRQLARIYRRILERYFA.

A Zn(2+)-binding site is contributed by His70. Residue Asp72 is part of the active site. Zn(2+) is bound at residue Asp103. Glu137 functions as the Proton acceptor in the catalytic mechanism. Residues Glu138, Glu166, and His355 each coordinate Zn(2+).

The protein belongs to the peptidase M20A family. DapE subfamily. As to quaternary structure, homodimer. Zn(2+) serves as cofactor. Requires Co(2+) as cofactor.

It catalyses the reaction N-succinyl-(2S,6S)-2,6-diaminopimelate + H2O = (2S,6S)-2,6-diaminopimelate + succinate. It participates in amino-acid biosynthesis; L-lysine biosynthesis via DAP pathway; LL-2,6-diaminopimelate from (S)-tetrahydrodipicolinate (succinylase route): step 3/3. In terms of biological role, catalyzes the hydrolysis of N-succinyl-L,L-diaminopimelic acid (SDAP), forming succinate and LL-2,6-diaminopimelate (DAP), an intermediate involved in the bacterial biosynthesis of lysine and meso-diaminopimelic acid, an essential component of bacterial cell walls. The protein is Succinyl-diaminopimelate desuccinylase of Paracoccus denitrificans (strain Pd 1222).